Here is a 393-residue protein sequence, read N- to C-terminus: Squamosa promoter-binding-like protein 11 (393 aa).

The interval 74–96 (QSTSINSSSPEAKRCKLASESSP) is disordered. The SBP-type zinc finger occupies 172 to 249 (VPRCQIDGCE…SHHNARRRKP (78 aa)). Residues Cys-175, Cys-180, Cys-197, His-200, Cys-216, Cys-219, His-223, and Cys-235 each coordinate Zn(2+). A Bipartite nuclear localization signal motif is present at residues 232-248 (KRSCRKRLSHHNARRRK).

It depends on Zn(2+) as a cofactor.

It is found in the nucleus. Its function is as follows. Trans-acting factor that binds specifically to the consensus nucleotide sequence 5'-TNCGTACAA-3'. The protein is Squamosa promoter-binding-like protein 11 (SPL11) of Arabidopsis thaliana (Mouse-ear cress).